Reading from the N-terminus, the 256-residue chain is Carboxysome shell protein CsoS1D (256 aa).

The segment at 1–24 is disordered; that stretch reads MEPTSSLNRGDRKKGSSLVTGSEV. BMC circularly permuted domains are found at residues 55–157 and 158–256; these read ELRT…RTKP and STSW…ISNY. The Gates the pore signature appears at 120–121; the sequence is ER.

Belongs to the EutL/PduB family. As to quaternary structure, homotrimer. Forms a dimer of stacked trimers, the same faces interact. A CsoS1-CsoS1D-CsoS2 complex can be isolated following expression in E.coli.

It is found in the carboxysome. In terms of biological role, part of the carboxysome shell, a polyhedral inclusion where RuBisCO (ribulose bisphosphate carboxylase, cbbL-cbbS) is sequestered. It may control transport of RuBisCO reactants in and out of the carboxysome. There are estimated to be 6 CsoS1D hexamers per carboxysome. This is Carboxysome shell protein CsoS1D from Prochlorococcus marinus subsp. pastoris (strain CCMP1986 / NIES-2087 / MED4).